A 407-amino-acid polypeptide reads, in one-letter code: Phosphopentomutase (407 aa).

Mn(2+)-binding residues include Asp10, Asp306, His311, Asp347, His348, and His359.

It belongs to the phosphopentomutase family. The cofactor is Mn(2+).

The protein resides in the cytoplasm. It catalyses the reaction 2-deoxy-alpha-D-ribose 1-phosphate = 2-deoxy-D-ribose 5-phosphate. It carries out the reaction alpha-D-ribose 1-phosphate = D-ribose 5-phosphate. The protein operates within carbohydrate degradation; 2-deoxy-D-ribose 1-phosphate degradation; D-glyceraldehyde 3-phosphate and acetaldehyde from 2-deoxy-alpha-D-ribose 1-phosphate: step 1/2. Functionally, isomerase that catalyzes the conversion of deoxy-ribose 1-phosphate (dRib-1-P) and ribose 1-phosphate (Rib-1-P) to deoxy-ribose 5-phosphate (dRib-5-P) and ribose 5-phosphate (Rib-5-P), respectively. The protein is Phosphopentomutase of Salmonella paratyphi A (strain AKU_12601).